The sequence spans 152 residues: Transcriptional regulator MraZ (152 aa).

2 consecutive SpoVT-AbrB domains span residues 5-52 (ATMV…TLPA) and 81-124 (ASEC…DEQT).

This sequence belongs to the MraZ family. In terms of assembly, forms oligomers.

The protein localises to the cytoplasm. It localises to the nucleoid. In terms of biological role, negatively regulates its own expression and that of the subsequent genes in the proximal part of the division and cell wall (dcw) gene cluster. Acts by binding directly to DNA. May also regulate the expression of genes outside the dcw cluster. The protein is Transcriptional regulator MraZ of Yersinia enterocolitica serotype O:8 / biotype 1B (strain NCTC 13174 / 8081).